Consider the following 438-residue polypeptide: Coenzyme A disulfide reductase (438 aa).

8-33 contributes to the FAD binding site; the sequence is GAVAGGATCASQIRRLDKESDIIIFE. Substrate contacts are provided by Thr15, Gln19, Arg22, Ser39, and Asn42. The active-site Nucleophile is the Cys43. Cys43 acts as the Redox-active in catalysis. Lys71 is a substrate binding site. An NADP(+)-binding site is contributed by 151–166; it reads VLVVGAGYVSLEVLEN. 267–277 provides a ligand contact to FAD; sequence TNVPNIYAIGD. Residue His299 coordinates substrate. Residue Tyr419 coordinates FAD. Lys427 serves as a coordination point for substrate.

It belongs to the class-III pyridine nucleotide-disulfide oxidoreductase family. In terms of assembly, homodimer. Requires FAD as cofactor.

It catalyses the reaction NADP(+) + 2 CoA = CoA-disulfide + NADPH + H(+). In terms of biological role, catalyzes specifically the NADPH-dependent reduction of coenzyme A disulfide. This is Coenzyme A disulfide reductase from Staphylococcus aureus (strain USA300).